A 338-amino-acid polypeptide reads, in one-letter code: Phosphatidylglycerol--prolipoprotein diacylglyceryl transferase (338 aa).

4 helical membrane passes run 24–44 (WYGL…SYQV), 67–87 (LFIW…TLVY), 115–135 (GFQG…VILW), and 141–161 (FKFA…YTFG). Position 162 (Arg162) interacts with a 1,2-diacyl-sn-glycero-3-phospho-(1'-sn-glycerol). Transmembrane regions (helical) follow at residues 224-244 (PSQL…LWLL), 252-272 (GFLV…IEYF), and 304-324 (GQIL…ILYL).

Belongs to the Lgt family.

It is found in the cell inner membrane. It catalyses the reaction L-cysteinyl-[prolipoprotein] + a 1,2-diacyl-sn-glycero-3-phospho-(1'-sn-glycerol) = an S-1,2-diacyl-sn-glyceryl-L-cysteinyl-[prolipoprotein] + sn-glycerol 1-phosphate + H(+). The protein operates within protein modification; lipoprotein biosynthesis (diacylglyceryl transfer). In terms of biological role, catalyzes the transfer of the diacylglyceryl group from phosphatidylglycerol to the sulfhydryl group of the N-terminal cysteine of a prolipoprotein, the first step in the formation of mature lipoproteins. The chain is Phosphatidylglycerol--prolipoprotein diacylglyceryl transferase from Treponema denticola (strain ATCC 35405 / DSM 14222 / CIP 103919 / JCM 8153 / KCTC 15104).